A 376-amino-acid chain; its full sequence is uncharacterized protein (376 aa).

Topologically, residues Met-1–Ser-280 are lumenal. Positions 66, 115, 178, 233, 270, and 272 each coordinate NADP(+). Lys-233 functions as the Lowers pKa of active site Tyr in the catalytic mechanism. Residues Phe-281–Leu-301 traverse the membrane as a helical segment. Topologically, residues Lys-302–Lys-376 are cytoplasmic.

This sequence belongs to the short-chain dehydrogenases/reductases (SDR) family.

It localises to the cytoplasm. The protein resides in the endoplasmic reticulum membrane. Its function is as follows. May be involved in lipid metabolism. This is an uncharacterized protein from Schizosaccharomyces pombe (strain 972 / ATCC 24843) (Fission yeast).